The primary structure comprises 296 residues: Protease HtpX homolog (296 aa).

The next 2 helical transmembrane spans lie at 7-27 (TVLL…LVAG) and 29-49 (QGMI…YFFS). Residue histidine 131 coordinates Zn(2+). Glutamate 132 is a catalytic residue. Histidine 135 lines the Zn(2+) pocket. 2 consecutive transmembrane segments (helical) span residues 141–161 (ILIS…ANMA) and 178–198 (IASI…ATLI). Residue glutamate 207 coordinates Zn(2+).

It belongs to the peptidase M48B family. Requires Zn(2+) as cofactor.

The protein resides in the cell inner membrane. This is Protease HtpX homolog from Sulfurihydrogenibium sp. (strain YO3AOP1).